Reading from the N-terminus, the 118-residue chain is Large ribosomal subunit protein bL19 (118 aa).

The protein belongs to the bacterial ribosomal protein bL19 family.

Its function is as follows. This protein is located at the 30S-50S ribosomal subunit interface and may play a role in the structure and function of the aminoacyl-tRNA binding site. This is Large ribosomal subunit protein bL19 from Herpetosiphon aurantiacus (strain ATCC 23779 / DSM 785 / 114-95).